The sequence spans 718 residues: Polyribonucleotide nucleotidyltransferase (718 aa).

Aspartate 496 and aspartate 502 together coordinate Mg(2+). Positions 563–622 constitute a KH domain; it reads PRLLTIKIDPDMIGLVIGPGGKTIKGITEETGAKIDIEDDGTVTISAVDENKAKRARNIV. The 69-residue stretch at 632–700 folds into the S1 motif domain; the sequence is GDVYAGRVTR…NKGRINLTRL (69 aa).

As to quaternary structure, may form homodimers or higher order multimers. Interacts with RNase E (rne). It depends on Mg(2+) as a cofactor.

It is found in the cytoplasm. The catalysed reaction is RNA(n+1) + phosphate = RNA(n) + a ribonucleoside 5'-diphosphate. Involved in mRNA degradation. Catalyzes the phosphorolysis of single-stranded polyribonucleotides processively in the 3'- to 5'-direction. This is Polyribonucleotide nucleotidyltransferase from Nostoc sp. (strain PCC 7120 / SAG 25.82 / UTEX 2576).